A 273-amino-acid polypeptide reads, in one-letter code: Epidermal growth factor-like protein 7 (273 aa).

The signal sequence occupies residues 1-23 (MRGSQEVLLMWLLVLAVGGTEHA). Residues 27–104 (GRRVCAVRAH…TSGLPGACGA (78 aa)) enclose the EMI domain. 9 disulfide bridges follow: Cys-31–Cys-89, Cys-56–Cys-62, Cys-88–Cys-102, Cys-107–Cys-117, Cys-111–Cys-123, Cys-125–Cys-134, Cys-141–Cys-152, Cys-148–Cys-161, and Cys-163–Cys-176. The region spanning 103 to 135 (GAAICQPPCRNGGSCVQPGRCRCPAGWRGDTCQ) is the EGF-like 1 domain. The Cell attachment site motif lies at 130–132 (RGD). The EGF-like 2; calcium-binding domain occupies 137 to 177 (DVDECSARRGGCPQRCVNTAGSYWCQCWEGHSLSADGTLCV). A coiled-coil region spans residues 192 to 219 (VDSAMKEEVQRLQSRVDLLEEKLQLVLA).

In terms of assembly, interacts with ITGAV/ITGB3 in an RGD-dependent manner, increasing endothelial cell's motility.

The protein localises to the secreted. Its subcellular location is the extracellular space. Its function is as follows. Regulates vascular tubulogenesis in vivo. Inhibits platelet-derived growth factor (PDGF)-BB-induced smooth muscle cell migration and promotes endothelial cell adhesion to the extracellular matrix and angiogenesis. The polypeptide is Epidermal growth factor-like protein 7 (EGFL7) (Homo sapiens (Human)).